Here is a 117-residue protein sequence, read N- to C-terminus: Prefoldin subunit beta (117 aa).

Belongs to the prefoldin subunit beta family. In terms of assembly, heterohexamer of two alpha and four beta subunits.

Its subcellular location is the cytoplasm. Molecular chaperone capable of stabilizing a range of proteins. Seems to fulfill an ATP-independent, HSP70-like function in archaeal de novo protein folding. The polypeptide is Prefoldin subunit beta (Methanococcoides burtonii (strain DSM 6242 / NBRC 107633 / OCM 468 / ACE-M)).